A 1447-amino-acid polypeptide reads, in one-letter code: METVYDFFAKPINPRRFSGVKIALASSEQILQWSFGEITKPETINYRTFRPERDGLFCAKIFGPTKDFECNCGKYKRMKHRGVTCEKCGVEVIQSKVRRERMAHIKLASPVSHIWFLKSLPSKIGNVLDLTLKELERVLYFDSYIVIDPKNTDLSPMQLLSEEAYQEARAKYGSDFEAAIGAEAIKALLDKVDLEVLSTQLREDLKATSVEAKRKKLAKRLRIVDAFAKSGVSPSWMIIEVVPVLPPDLRPLVPLEGGRFATSDLNDLYRRVINRNNRLKRLMELKAPDIIIRNEKRMLQEAVDVLFDNGRHGRAVTGSNKRPLKSLTDTLKGKQGRFRQNLLGKRVDYSGRTVITIGPNLRLHQCGLPKQMALELFKPFIYYRLEQKGYVSTVKSAKKMVEREVPEVWDTLEEVVKEYPVMLNRAPTLHRLGIQAFEPVLIEGKAIQLHPLVCTAFNADFDGDQMAVHIPLSVEAQIEARVLMLATNNILSPANGSPIIVPTQDIVLGTYYMTKTIEGTKGEGVVFSGPEEVVAAFDSGTVGLHAAISVRINGKLYDTSVGRVLVWEVIPQQIVPVFKTIHFSAKKEANSVLAEIKRGASFVDMQKKHGDESGVDYERAMKKEDMITEFGLSEADADYLFSLKEGECSDIIGISDGYRLFKLAGYRSEIPFEMVNRPLGKKAIRELVDGAYRNTGLKSTVILADRLKDIGYKYSTLGGLSISIDAMVVPEKKWDIIKAAEKKVEEIANQYKEGLITQGEKYNKVVDIWSKATDDIANEMMEAMRTDAGTPTGRFNPVFMMADSGARGSKDQMRQLAGMRGLMAKPSGEIIETPIVANFREGLSVLQYFISTHGARKGLADTALKTANSGYLTRRLADVAQDCIITEDDCGAMMGVEVEALVEGGEIIERLVDRVIGRIALEDIRDPFTDEVIVRGGEEISERHLSVIENSGLTKIWIRSVLTCKSETGICAKCYGRDFAHGKLVEHGQAVGILAAQSIGEPGTQLTMRTFHIGGTASRKVERAEIRARVDGFVRLGDLKLVENAEKKLVVMNRRGGEFTIVNKAGREVEKCPVIYGATIVVKDGQDIQAGDVLAAWDPFTTPIVAEVAGTVKFGDIVKGKTMQEMVDPVTGKSSQTIIDESRTHDVRPRISIKDDENKTATLPDGKSKARYPLPVGAVLLVEENDTIRAGDVIAKLPRATTKTKDITGGLPRVAELFEVRKPKEAAILSEINGYISIAKATTKKGKQKVTVAPVDGGEPREYLIPRGKHINVYDGDYIRAGEEIVAGSANPQDVMNIRGDVALARYLVDEVQEVYRLQGVTINDKHIEVIVRQMMRRVKIKEIGDTEFIDDEQVDRQRFEDTNREVIANGGKPAVGEPLILGITKASLATESFISAASFQETTKVLTDASIAGKTDYLRGLKENVIMGRLIPAGTGFVEYRKAAEK.

Residues C70, C72, C85, and C88 each coordinate Zn(2+). Mg(2+)-binding residues include D460, D462, and D464. The Zn(2+) site is built by C890, C964, C971, and C974.

This sequence belongs to the RNA polymerase beta' chain family. The RNAP catalytic core consists of 2 alpha, 1 beta, 1 beta' and 1 omega subunit. When a sigma factor is associated with the core the holoenzyme is formed, which can initiate transcription. It depends on Mg(2+) as a cofactor. Zn(2+) serves as cofactor.

It catalyses the reaction RNA(n) + a ribonucleoside 5'-triphosphate = RNA(n+1) + diphosphate. In terms of biological role, DNA-dependent RNA polymerase catalyzes the transcription of DNA into RNA using the four ribonucleoside triphosphates as substrates. This Desulfosudis oleivorans (strain DSM 6200 / JCM 39069 / Hxd3) (Desulfococcus oleovorans) protein is DNA-directed RNA polymerase subunit beta'.